Reading from the N-terminus, the 1503-residue chain is EF-hand calcium-binding domain-containing protein 5 (1503 aa).

The interval 1–23 (MNESASQEELRPAQENRKEDKER) is disordered. Residues 8–23 (EELRPAQENRKEDKER) are compositionally biased toward basic and acidic residues. S77 is modified (phosphoserine). 3 disordered regions span residues 477 to 518 (ASKT…EQGP), 544 to 656 (IEPG…QGPY), and 730 to 750 (FPETTKKEVQKDKPCEPKSQK). Residues 549-561 (HTESTLEQGSSRR) are compositionally biased toward polar residues. Composition is skewed to basic and acidic residues over residues 562–582 (LLTEQETHRESTTEQGQHKGS) and 607–622 (GSRRESIAEQDRHKGS). In terms of domain architecture, EF-hand spans 869–904 (RQRLLLEAIFQKWDSDGSGFLDLKEVDELLYTYKEG). The Ca(2+) site is built by D882, D884, S886, and E893.

The protein is EF-hand calcium-binding domain-containing protein 5 (EFCAB5) of Homo sapiens (Human).